Reading from the N-terminus, the 225-residue chain is Membrane protein (225 aa).

The Virion surface segment spans residues 1-20 (MPNETNCTLDFEQSVQLFKE). Residues 21–41 (YNLFITAFLLFLTIILQYGYA) traverse the membrane as a helical segment. Residues 42–51 (TRTKVIYTLK) lie on the Intravirion side of the membrane. The chain crosses the membrane as a helical span at residues 52–72 (MIVLWCFWPLNIAVGVISCTY). Residues 73–77 (PPNTG) lie on the Virion surface side of the membrane. A helical membrane pass occupies residues 78-98 (GLVVAIILTVFACLSFVGYWI). Topologically, residues 99-225 (QSIRLFKRCR…VATGGSSLYT (127 aa)) are intravirion.

Belongs to the gammacoronaviruses M protein family. As to quaternary structure, homomultimer. Interacts with envelope E protein in the budding compartment of the host cell, which is located between endoplasmic reticulum and the Golgi complex. Forms a complex with HE and S proteins. Interacts with nucleocapsid N protein. This interaction probably participates in RNA packaging into the virus.

Its subcellular location is the virion membrane. The protein localises to the host Golgi apparatus membrane. In terms of biological role, component of the viral envelope that plays a central role in virus morphogenesis and assembly via its interactions with other viral proteins. The sequence is that of Membrane protein from Avian infectious bronchitis virus (strain Beaudette US) (IBV).